Consider the following 353-residue polypeptide: Holliday junction branch migration complex subunit RuvB (353 aa).

The tract at residues 1 to 183 (MSGEGLVSAA…FGFTAHMDFY (183 aa)) is large ATPase domain (RuvB-L). Residues Leu22, Arg23, Gly64, Lys67, Thr68, Ser69, 130–132 (EDF), Arg173, Tyr183, and Arg220 contribute to the ATP site. Thr68 contributes to the Mg(2+) binding site. Positions 184–254 (DAAELALVLT…VARAALRIYD (71 aa)) are small ATPAse domain (RuvB-S). The interval 257 to 353 (ALGLDRLDRA…ALFGEDLPAS (97 aa)) is head domain (RuvB-H). DNA-binding residues include Arg312 and Arg317.

This sequence belongs to the RuvB family. As to quaternary structure, homohexamer. Forms an RuvA(8)-RuvB(12)-Holliday junction (HJ) complex. HJ DNA is sandwiched between 2 RuvA tetramers; dsDNA enters through RuvA and exits via RuvB. An RuvB hexamer assembles on each DNA strand where it exits the tetramer. Each RuvB hexamer is contacted by two RuvA subunits (via domain III) on 2 adjacent RuvB subunits; this complex drives branch migration. In the full resolvosome a probable DNA-RuvA(4)-RuvB(12)-RuvC(2) complex forms which resolves the HJ.

The protein resides in the cytoplasm. It catalyses the reaction ATP + H2O = ADP + phosphate + H(+). In terms of biological role, the RuvA-RuvB-RuvC complex processes Holliday junction (HJ) DNA during genetic recombination and DNA repair, while the RuvA-RuvB complex plays an important role in the rescue of blocked DNA replication forks via replication fork reversal (RFR). RuvA specifically binds to HJ cruciform DNA, conferring on it an open structure. The RuvB hexamer acts as an ATP-dependent pump, pulling dsDNA into and through the RuvAB complex. RuvB forms 2 homohexamers on either side of HJ DNA bound by 1 or 2 RuvA tetramers; 4 subunits per hexamer contact DNA at a time. Coordinated motions by a converter formed by DNA-disengaged RuvB subunits stimulates ATP hydrolysis and nucleotide exchange. Immobilization of the converter enables RuvB to convert the ATP-contained energy into a lever motion, pulling 2 nucleotides of DNA out of the RuvA tetramer per ATP hydrolyzed, thus driving DNA branch migration. The RuvB motors rotate together with the DNA substrate, which together with the progressing nucleotide cycle form the mechanistic basis for DNA recombination by continuous HJ branch migration. Branch migration allows RuvC to scan DNA until it finds its consensus sequence, where it cleaves and resolves cruciform DNA. The polypeptide is Holliday junction branch migration complex subunit RuvB (Parafrankia sp. (strain EAN1pec)).